A 452-amino-acid chain; its full sequence is Mitochondrial distribution and morphology protein 10 (452 aa).

The interval 105–130 (PLAPESWDSDGPGHEGSDGQEDETTP) is disordered.

The protein belongs to the MDM10 family. As to quaternary structure, component of the ER-mitochondria encounter structure (ERMES) or MDM complex, composed of MMM1, MDM10, MDM12 and MDM34. Associates with the mitochondrial outer membrane sorting assembly machinery SAM(core) complex.

Its subcellular location is the mitochondrion outer membrane. In terms of biological role, component of the ERMES/MDM complex, which serves as a molecular tether to connect the endoplasmic reticulum and mitochondria. Components of this complex are involved in the control of mitochondrial shape and protein biogenesis and may function in phospholipid exchange. MDM10 is involved in the late assembly steps of the general translocase of the mitochondrial outer membrane (TOM complex). Functions in the TOM40-specific route of the assembly of outer membrane beta-barrel proteins, including the association of TOM40 with the receptor TOM22 and small TOM proteins. Can associate with the SAM(core) complex as well as the MDM12-MMM1 complex, both involved in late steps of the major beta-barrel assembly pathway, that is responsible for biogenesis of all outer membrane beta-barrel proteins. May act as a switch that shuttles between both complexes and channels precursor proteins into the TOM40-specific pathway. Plays a role in mitochondrial morphology and in the inheritance of mitochondria. This is Mitochondrial distribution and morphology protein 10 from Uncinocarpus reesii (strain UAMH 1704).